Here is a 526-residue protein sequence, read N- to C-terminus: Putative D-lactate dehydrogenase C713.03, mitochondrial (526 aa).

The region spanning 93–272 (YRGKTQLALK…TKLSVICPKR (180 aa)) is the FAD-binding PCMH-type domain.

The protein belongs to the FAD-binding oxidoreductase/transferase type 4 family. Requires FAD as cofactor.

The protein localises to the mitochondrion matrix. The catalysed reaction is (R)-lactate + 2 Fe(III)-[cytochrome c] = 2 Fe(II)-[cytochrome c] + pyruvate + 2 H(+). The chain is Putative D-lactate dehydrogenase C713.03, mitochondrial from Schizosaccharomyces pombe (strain 972 / ATCC 24843) (Fission yeast).